The chain runs to 166 residues: Tegument protein UL55 homolog (166 aa).

This sequence belongs to the alphaherpesvirinae HHV-1 UL55 family.

The protein localises to the virion tegument. Its subcellular location is the host nucleus matrix. In Gallid herpesvirus 2 (strain Chicken/Md5/ATCC VR-987) (GaHV-2), this protein is Tegument protein UL55 homolog (MDV070).